The primary structure comprises 505 residues: Probable bifunctional methylthioribulose-1-phosphate dehydratase/enolase-phosphatase E1 (505 aa).

The methylthioribulose-1-phosphate dehydratase stretch occupies residues 1-237 (MGLDKDGISN…ALKLHQLGLD (237 aa)). C109 lines the substrate pocket. Zn(2+)-binding residues include H127 and H129. The active-site Proton donor/acceptor; for methylthioribulose-1-phosphate dehydratase activity is E152. H202 is a binding site for Zn(2+). The segment at 266-505 (FVLDIEGTTT…FRTAKSLLEL (240 aa)) is enolase-phosphatase E1. Mg(2+) is bound by residues D269 and E271. Substrate-binding positions include 404–405 (SS) and K438. Residue D464 participates in Mg(2+) binding.

In the N-terminal section; belongs to the aldolase class II family. MtnB subfamily. This sequence in the C-terminal section; belongs to the HAD-like hydrolase superfamily. MasA/MtnC family. It depends on Zn(2+) as a cofactor. Mg(2+) serves as cofactor.

The catalysed reaction is 5-(methylsulfanyl)-D-ribulose 1-phosphate = 5-methylsulfanyl-2,3-dioxopentyl phosphate + H2O. It catalyses the reaction 5-methylsulfanyl-2,3-dioxopentyl phosphate + H2O = 1,2-dihydroxy-5-(methylsulfanyl)pent-1-en-3-one + phosphate. It participates in amino-acid biosynthesis; L-methionine biosynthesis via salvage pathway; L-methionine from S-methyl-5-thio-alpha-D-ribose 1-phosphate: step 2/6. It functions in the pathway amino-acid biosynthesis; L-methionine biosynthesis via salvage pathway; L-methionine from S-methyl-5-thio-alpha-D-ribose 1-phosphate: step 3/6. The protein operates within amino-acid biosynthesis; L-methionine biosynthesis via salvage pathway; L-methionine from S-methyl-5-thio-alpha-D-ribose 1-phosphate: step 4/6. This Physcomitrium patens (Spreading-leaved earth moss) protein is Probable bifunctional methylthioribulose-1-phosphate dehydratase/enolase-phosphatase E1.